We begin with the raw amino-acid sequence, 414 residues long: Gamma-glutamyl phosphate reductase (414 aa).

Belongs to the gamma-glutamyl phosphate reductase family.

The protein resides in the cytoplasm. The catalysed reaction is L-glutamate 5-semialdehyde + phosphate + NADP(+) = L-glutamyl 5-phosphate + NADPH + H(+). Its pathway is amino-acid biosynthesis; L-proline biosynthesis; L-glutamate 5-semialdehyde from L-glutamate: step 2/2. In terms of biological role, catalyzes the NADPH-dependent reduction of L-glutamate 5-phosphate into L-glutamate 5-semialdehyde and phosphate. The product spontaneously undergoes cyclization to form 1-pyrroline-5-carboxylate. This is Gamma-glutamyl phosphate reductase from Thermoanaerobacter pseudethanolicus (strain ATCC 33223 / 39E) (Clostridium thermohydrosulfuricum).